A 409-amino-acid polypeptide reads, in one-letter code: Glycosaminoglycan xylosylkinase (409 aa).

The Cytoplasmic portion of the chain corresponds to 1–6; sequence MKLKQR. Residues 7-25 form a helical; Signal-anchor for type II membrane protein membrane-spanning segment; the sequence is VVVLCAVLFLLGLAKVFLL. The Lumenal segment spans residues 26 to 409; it reads DGGEGSAASR…IEDRMNLPHP (384 aa). Residues Q107 and K123 each coordinate ATP. Residue D142 coordinates Mn(2+). N-linked (GlcNAc...) asparagine glycosylation occurs at N193. Disulfide bonds link C196–C211 and C201–C204. 222–225 provides a ligand contact to ATP; the sequence is TLWL. 2 cysteine pairs are disulfide-bonded: C257-C331 and C332-C389. D289 is an active-site residue. ATP contacts are provided by E294 and D309. D309 is a binding site for Mn(2+).

Belongs to the FAM20 family. It depends on Mn(2+) as a cofactor.

Its subcellular location is the golgi apparatus membrane. It carries out the reaction 3-O-(beta-D-galactosyl-(1-&gt;3)-beta-D-galactosyl-(1-&gt;4)-beta-D-xylosyl)-L-seryl-[protein] + ATP = 3-O-(beta-D-galactosyl-(1-&gt;3)-beta-D-galactosyl-(1-&gt;4)-beta-D-2-O-phosphoxylosyl)-L-seryl-[protein] + ADP + H(+). Functionally, responsible for the 2-O-phosphorylation of xylose in the glycosaminoglycan-protein linkage region of proteoglycans thereby regulating the amount of mature GAG chains. Sulfated glycosaminoglycans (GAGs), including heparan sulfate and chondroitin sulfate, are synthesized on the so-called common GAG-protein linkage region (GlcUAbeta1-3Galbeta1-3Galbeta1-4Xylbeta1-O-Ser) of core proteins, which is formed by the stepwise addition of monosaccharide residues by the respective specific glycosyltransferases. The protein is Glycosaminoglycan xylosylkinase of Danio rerio (Zebrafish).